The primary structure comprises 274 residues: Large ribosomal subunit protein bL28m (274 aa).

Residues 249 to 274 (SETEEFGLGQEEDLFMKEEPKPTKMA) are disordered. The segment covering 262–274 (LFMKEEPKPTKMA) has biased composition (basic and acidic residues).

The protein belongs to the bacterial ribosomal protein bL28 family. As to quaternary structure, component of the mitochondrial large ribosomal subunit (mt-LSU). Mature N.crassa 74S mitochondrial ribosomes consist of a small (37S) and a large (54S) subunit. The 37S small subunit contains a 16S ribosomal RNA (16S mt-rRNA) and 32 different proteins. The 54S large subunit contains a 23S rRNA (23S mt-rRNA) and 42 different proteins.

It localises to the mitochondrion. Its function is as follows. Component of the mitochondrial ribosome (mitoribosome), a dedicated translation machinery responsible for the synthesis of mitochondrial genome-encoded proteins, including at least some of the essential transmembrane subunits of the mitochondrial respiratory chain. The mitoribosomes are attached to the mitochondrial inner membrane and translation products are cotranslationally integrated into the membrane. This is Large ribosomal subunit protein bL28m (mrpl24) from Neurospora crassa (strain ATCC 24698 / 74-OR23-1A / CBS 708.71 / DSM 1257 / FGSC 987).